A 373-amino-acid polypeptide reads, in one-letter code: Probable protein phosphatase 2C 73 (373 aa).

Residues 61–354 enclose the PPM-type phosphatase domain; it reads LASLFSKRGE…DDMSVVCLFL (294 aa). Mn(2+) is bound by residues D97, G98, D299, and D345.

This sequence belongs to the PP2C family. Mg(2+) serves as cofactor. The cofactor is Mn(2+).

The catalysed reaction is O-phospho-L-seryl-[protein] + H2O = L-seryl-[protein] + phosphate. It catalyses the reaction O-phospho-L-threonyl-[protein] + H2O = L-threonyl-[protein] + phosphate. This Arabidopsis thaliana (Mouse-ear cress) protein is Probable protein phosphatase 2C 73 (PPC6-7).